The chain runs to 135 residues: ATP synthase epsilon chain (135 aa).

The protein belongs to the ATPase epsilon chain family. F-type ATPases have 2 components, CF(1) - the catalytic core - and CF(0) - the membrane proton channel. CF(1) has five subunits: alpha(3), beta(3), gamma(1), delta(1), epsilon(1). CF(0) has three main subunits: a, b and c.

The protein resides in the cell inner membrane. In terms of biological role, produces ATP from ADP in the presence of a proton gradient across the membrane. The sequence is that of ATP synthase epsilon chain from Rhizobium johnstonii (strain DSM 114642 / LMG 32736 / 3841) (Rhizobium leguminosarum bv. viciae).